Here is a 325-residue protein sequence, read N- to C-terminus: DNA-directed RNA polymerase subunit alpha (325 aa).

The interval 1-239 (MQQFLRYNIN…DHLKPLIDIN (239 aa)) is alpha N-terminal domain (alpha-NTD). An alpha C-terminal domain (alpha-CTD) region spans residues 255-325 (EKNKKLSIPI…ELYDLKLKNN (71 aa)).

The protein belongs to the RNA polymerase alpha chain family. In terms of assembly, homodimer. The RNAP catalytic core consists of 2 alpha, 1 beta, 1 beta' and 1 omega subunit. When a sigma factor is associated with the core the holoenzyme is formed, which can initiate transcription.

It catalyses the reaction RNA(n) + a ribonucleoside 5'-triphosphate = RNA(n+1) + diphosphate. Functionally, DNA-dependent RNA polymerase catalyzes the transcription of DNA into RNA using the four ribonucleoside triphosphates as substrates. The polypeptide is DNA-directed RNA polymerase subunit alpha (Mycoplasmoides gallisepticum (strain R(low / passage 15 / clone 2)) (Mycoplasma gallisepticum)).